Reading from the N-terminus, the 151-residue chain is Probable transcriptional regulator syrB3 (151 aa).

A disordered region spans residues 1–65 (MVDESNAGPV…QERSEKLRLI (65 aa)). A compositionally biased stretch (low complexity) spans 7–23 (AGPVAPAVVADAEVKAP). A compositionally biased stretch (basic and acidic residues) spans 52 to 65 (GYSEQERSEKLRLI).

The protein belongs to the SyrB family.

The chain is Probable transcriptional regulator syrB3 (syrB3) from Rhizobium meliloti (strain 1021) (Ensifer meliloti).